A 66-amino-acid chain; its full sequence is Conotoxin Lt5.6 (66 aa).

An N-terminal signal peptide occupies residues M1–P19. The propeptide occupies K20–A54.

Belongs to the conotoxin T superfamily. Contains 2 disulfide bonds that can be either 'C1-C3, C2-C4' or 'C1-C4, C2-C3', since these disulfide connectivities have been observed for conotoxins with cysteine framework V (for examples, see AC P0DQQ7 and AC P81755). As to expression, expressed by the venom duct.

Its subcellular location is the secreted. In Conus litteratus (Lettered cone), this protein is Conotoxin Lt5.6.